The primary structure comprises 1114 residues: Probable guanine nucleotide exchange factor MCF2L2 (1114 aa).

A CRAL-TRIO domain is found at 11–193; the sequence is PQELTRRLAT…ELGGTLEYRH (183 aa). Residues 323–428 form a Spectrin repeat; it reads QHFEHDFCKA…KWDILGKSLE (106 aa). The disordered stretch occupies residues 530 to 614; it reads QTRPVQPVAP…NPELEQQARL (85 aa). The segment covering 546 to 559 has biased composition (polar residues); sequence KWVSSKTSQPSTSV. Basic and acidic residues predominate over residues 577 to 606; sequence LNSRGKEDDETKFEVKSEEIFESHHERGNP. The region spanning 619–822 is the DH domain; that stretch reads PRRRIIRDLL…EDLIKSCELA (204 aa). Residues 834–954 form the PH domain; the sequence is DIGKLGKLLL…WFSEISKLLM (121 aa). Over residues 962–975 the composition is skewed to polar residues; the sequence is DQGNPQFEMSTSKG. A disordered region spans residues 962–1114; that stretch reads DQGNPQFEMS…LRPRTSAQES (153 aa). Residues 986-997 are compositionally biased toward basic and acidic residues; sequence NMERATTSKEDP. Over residues 1017–1028 the composition is skewed to acidic residues; that stretch reads TFEDCEGAEDME. Composition is skewed to basic and acidic residues over residues 1043–1067 and 1074–1084; these read DDSH…GEKE and TATRSTEEERA.

This sequence belongs to the MCF2 family. Significantly expressed in brain and modestly in pancreas, brain and testis.

Probably functions as a guanine nucleotide exchange factor. The protein is Probable guanine nucleotide exchange factor MCF2L2 (MCF2L2) of Homo sapiens (Human).